The sequence spans 317 residues: Ferrochelatase (317 aa).

His192 and Glu271 together coordinate Fe cation.

Belongs to the ferrochelatase family.

It localises to the cytoplasm. The enzyme catalyses heme b + 2 H(+) = protoporphyrin IX + Fe(2+). It participates in porphyrin-containing compound metabolism; protoheme biosynthesis; protoheme from protoporphyrin-IX: step 1/1. Catalyzes the ferrous insertion into protoporphyrin IX. This Geobacter metallireducens (strain ATCC 53774 / DSM 7210 / GS-15) protein is Ferrochelatase.